A 304-amino-acid polypeptide reads, in one-letter code: Glutamyl-Q tRNA(Asp) synthetase (304 aa).

L-glutamate-binding positions include 14-18 (RFAPS) and glutamate 50. The 'HIGH' region motif lies at 17–27 (PSPSGPLHFGS). 4 residues coordinate Zn(2+): cysteine 106, cysteine 108, tyrosine 120, and cysteine 124. L-glutamate is bound by residues tyrosine 178 and arginine 196. Positions 234–238 (KLSKQ) match the 'KMSKS' region motif. An ATP-binding site is contributed by lysine 237.

The protein belongs to the class-I aminoacyl-tRNA synthetase family. GluQ subfamily. Zn(2+) is required as a cofactor.

Its function is as follows. Catalyzes the tRNA-independent activation of glutamate in presence of ATP and the subsequent transfer of glutamate onto a tRNA(Asp). Glutamate is transferred on the 2-amino-5-(4,5-dihydroxy-2-cyclopenten-1-yl) moiety of the queuosine in the wobble position of the QUC anticodon. This is Glutamyl-Q tRNA(Asp) synthetase from Vibrio cholerae serotype O1 (strain ATCC 39315 / El Tor Inaba N16961).